The sequence spans 179 residues: Large ribosomal subunit protein uL5 (179 aa).

It belongs to the universal ribosomal protein uL5 family. As to quaternary structure, part of the 50S ribosomal subunit; contacts the 5S rRNA and probably tRNA. Forms a bridge to the 30S subunit in the 70S ribosome.

This is one of the proteins that bind and probably mediate the attachment of the 5S RNA into the large ribosomal subunit, where it forms part of the central protuberance. In the 70S ribosome it contacts protein S13 of the 30S subunit (bridge B1b), connecting the 2 subunits; this bridge is implicated in subunit movement. May contact the P site tRNA; the 5S rRNA and some of its associated proteins might help stabilize positioning of ribosome-bound tRNAs. This Pyrobaculum aerophilum (strain ATCC 51768 / DSM 7523 / JCM 9630 / CIP 104966 / NBRC 100827 / IM2) protein is Large ribosomal subunit protein uL5.